Reading from the N-terminus, the 596-residue chain is Adenine deaminase (596 aa).

The protein belongs to the metallo-dependent hydrolases superfamily. Adenine deaminase family. Requires Mn(2+) as cofactor.

The catalysed reaction is adenine + H2O + H(+) = hypoxanthine + NH4(+). In Moorella thermoacetica (strain ATCC 39073 / JCM 9320), this protein is Adenine deaminase.